Here is a 274-residue protein sequence, read N- to C-terminus: Long chain fatty acid elongase 6 (274 aa).

Residues 1–30 are Extracellular-facing; sequence MPQGEVSFFEVLTTAPFSHELSKKHIAQTQ. Residues 31 to 51 form a helical membrane-spanning segment; that stretch reads YAAFWISMAYVVVIFGLKAVM. Over 52 to 69 the chain is Cytoplasmic; the sequence is TNRKPFDLTGPLNLWNAG. Residues 70–90 form a helical membrane-spanning segment; it reads LAIFSTLGSLATTFGLLHEFF. Residues 91–111 are Extracellular-facing; the sequence is SRGFFESYIHIGDFYNGLSGM. Residues 112 to 132 traverse the membrane as a helical segment; the sequence is FTWLFVLSKVAEFGDTLFIIL. Topologically, residues 133 to 135 are cytoplasmic; the sequence is RKK. A helical transmembrane segment spans residues 136 to 156; that stretch reads PLMFLHWYHHVLTMNYAFMSF. The Extracellular portion of the chain corresponds to 157 to 159; sequence EAN. The helical transmembrane segment at 160–180 threads the bilayer; the sequence is LGFNTWITWMNFSVHSIMYGY. Residues 181-202 are Cytoplasmic-facing; it reads YMLRSFGVKVPAWIAKNITTMQ. A helical membrane pass occupies residues 203–223; it reads ILQFVITHFILFHVGYLAVTG. Topologically, residues 224–230 are extracellular; sequence QSVDSTP. Residues 231–251 form a helical membrane-spanning segment; sequence GYYWFCLLMEISYVVLFGNFY. At 252–274 the chain is on the cytoplasmic side; the sequence is YQSYIKGGGKKFNAEKKTEKKIE.

The protein belongs to the ELO family. As to expression, expressed in the gut, neurons, pharynx and muscles of the vulva.

The protein resides in the membrane. The catalysed reaction is isopentadecanoyl-CoA + malonyl-CoA + H(+) = 3-oxoisoheptadecanoyl-CoA + CO2 + CoA. It functions in the pathway lipid metabolism; fatty acid biosynthesis. Its function is as follows. Catalyzes the first and rate-limiting reaction of the four reactions that constitute the long-chain fatty acids elongation cycle. Uses malonyl-CoA to add 2 carbons per cycle to the chain of long-chain fatty acids. Condensing enzyme required for the formation of isoheptadecanoate (C17iso), which plays critical roles in animal development and growth. The chain is Long chain fatty acid elongase 6 (elo-6) from Caenorhabditis elegans.